The following is a 172-amino-acid chain: Histone H1-like protein HC2 (172 aa).

The segment at 1 to 77 is disordered; it reads MIGAQKKQSG…TVAKKPAVKK (77 aa). Residues 8–77 show a composition bias toward basic residues; it reads QSGKKTASRA…TVAKKPAVKK (70 aa).

Belongs to the histone H1/H5 family. HCT subfamily.

Functionally, might have a role in establishing the nucleoid structure of elementary bodies. The chain is Histone H1-like protein HC2 (hctB) from Chlamydia pneumoniae (Chlamydophila pneumoniae).